Here is a 320-residue protein sequence, read N- to C-terminus: MEMDFPVINMNNLNGESRVSVLNQINDACENWGFFELVNHGISHELMDKVEKLTKEHYRKCMEQRFKEMVASKGLDSVETEINDTDWESTFFLRHLPVSNMSEIGDLDEEYKKVMKEFADELEKLAEEVLDLLCENLGLEKGYLKKVFYGSKGPNFGTKVSNYPPCPKPELIKGLRAHTDAGGLILLFQDDKVSGLHVLKDGKWVDVPPMHHSIVINLGDQLEVITNGKYKSVMHRVIAQEDGNRMSIASFYNPGNDAVIYPAPALVEGEQEKTKLYPKFVFDDYMKLYVGLKFQAKEPRFEAMKAMESTNLNMGPIATV.

The Fe2OG dioxygenase domain maps to 154-254; that stretch reads PNFGTKVSNY…RMSIASFYNP (101 aa). Fe cation contacts are provided by His178, Asp180, and His235.

Belongs to the iron/ascorbate-dependent oxidoreductase family. Fe cation is required as a cofactor. Flowers.

It catalyses the reaction 1-aminocyclopropane-1-carboxylate + L-ascorbate + O2 = ethene + L-dehydroascorbate + hydrogen cyanide + CO2 + 2 H2O. Its pathway is alkene biosynthesis; ethylene biosynthesis via S-adenosyl-L-methionine; ethylene from S-adenosyl-L-methionine: step 2/2. The polypeptide is 1-aminocyclopropane-1-carboxylate oxidase 3 (ACO3) (Cucumis melo (Muskmelon)).